A 377-amino-acid chain; its full sequence is Tryptophan 2,3-dioxygenase (377 aa).

Substrate contacts are provided by residues 57–61 (FIITH) and R128. Residue H313 participates in heme binding. T328 is a binding site for substrate.

This sequence belongs to the tryptophan 2,3-dioxygenase family. As to quaternary structure, homotetramer. Dimer of dimers. Heme serves as cofactor.

The catalysed reaction is L-tryptophan + O2 = N-formyl-L-kynurenine. The protein operates within amino-acid degradation; L-tryptophan degradation via kynurenine pathway; L-kynurenine from L-tryptophan: step 1/2. It participates in pigment biosynthesis; ommochrome biosynthesis. Its function is as follows. Heme-dependent dioxygenase that catalyzes the oxidative cleavage of the L-tryptophan (L-Trp) pyrrole ring and converts L-tryptophan to N-formyl-L-kynurenine. Catalyzes the oxidative cleavage of the indole moiety. In Drosophila grimshawi (Hawaiian fruit fly), this protein is Tryptophan 2,3-dioxygenase.